We begin with the raw amino-acid sequence, 95 residues long: Small ubiquitin-related modifier 2-B (95 aa).

Residue K11 forms a Glycyl lysine isopeptide (Lys-Gly) (interchain with G-Cter in SUMO) linkage. The 80-residue stretch at 16–95 folds into the Ubiquitin-like domain; it reads DHINLKVAGQ…VFQQQTGGSY (80 aa). G93 is covalently cross-linked (Glycyl lysine isopeptide (Gly-Lys) (interchain with K-? in acceptor proteins)). Positions 94 to 95 are excised as a propeptide; the sequence is SY.

The protein belongs to the ubiquitin family. SUMO subfamily. As to quaternary structure, interacts with sae2 and ube2i. Covalently attached to a number of proteins, including top2. Polymeric chains can be formed through Lys-11 cross-linking. Post-translationally, cleavage of precursor form by a sentrin-specific protease is necessary for function.

The protein resides in the nucleus. Functionally, ubiquitin-like protein that can be covalently attached to proteins as a monomer or as a lysine-linked polymer. Covalent attachment via an isopeptide bond to its substrates requires prior activation by the E1 complex sae1-sae2 and linkage to the E2 enzyme ube2i, and can be promoted by an E3 ligase such as pias1-4. This post-translational modification on lysine residues of proteins plays a crucial role in a number of cellular processes such as nuclear transport, DNA replication and repair, mitosis and signal transduction. Polymeric sumo2 chains are also susceptible to polyubiquitination which functions as a signal for proteasomal degradation of modified proteins. In Xenopus laevis (African clawed frog), this protein is Small ubiquitin-related modifier 2-B (sumo2-b).